Reading from the N-terminus, the 174-residue chain is NADH-quinone oxidoreductase subunit C (174 aa).

This sequence belongs to the complex I 30 kDa subunit family. NDH-1 is composed of 14 different subunits. Subunits NuoB, C, D, E, F, and G constitute the peripheral sector of the complex.

It localises to the cell membrane. The catalysed reaction is a quinone + NADH + 5 H(+)(in) = a quinol + NAD(+) + 4 H(+)(out). Functionally, NDH-1 shuttles electrons from NADH, via FMN and iron-sulfur (Fe-S) centers, to quinones in the respiratory chain. The immediate electron acceptor for the enzyme in this species is believed to be ubiquinone. Couples the redox reaction to proton translocation (for every two electrons transferred, four hydrogen ions are translocated across the cytoplasmic membrane), and thus conserves the redox energy in a proton gradient. The polypeptide is NADH-quinone oxidoreductase subunit C (Roseiflexus sp. (strain RS-1)).